A 474-amino-acid chain; its full sequence is L-arabinose isomerase 2 (474 aa).

Mn(2+) is bound by residues Glu306, Glu331, His348, and His447.

Belongs to the arabinose isomerase family. Mn(2+) is required as a cofactor.

It carries out the reaction beta-L-arabinopyranose = L-ribulose. Its pathway is carbohydrate degradation; L-arabinose degradation via L-ribulose; D-xylulose 5-phosphate from L-arabinose (bacterial route): step 1/3. Functionally, catalyzes the conversion of L-arabinose to L-ribulose. The polypeptide is L-arabinose isomerase 2 (Bacillus licheniformis (strain ATCC 14580 / DSM 13 / JCM 2505 / CCUG 7422 / NBRC 12200 / NCIMB 9375 / NCTC 10341 / NRRL NRS-1264 / Gibson 46)).